We begin with the raw amino-acid sequence, 150 residues long: uncharacterized protein (150 aa).

Residues 1-19 are compositionally biased toward low complexity; that stretch reads MNDDSSSSSSGDSSDGSSG. 2 disordered regions span residues 1 to 21 and 85 to 131; these read MNDD…SGTT and EPEA…AYPE. A compositionally biased stretch (pro residues) spans 106–115; sequence RPPPTEPPTV.

This is an uncharacterized protein from Schizosaccharomyces pombe (strain 972 / ATCC 24843) (Fission yeast).